A 428-amino-acid polypeptide reads, in one-letter code: Pyruvate kinase (428 aa).

Arg34 lines the substrate pocket. K(+) contacts are provided by Asn36, Ser38, Asp68, and Thr69. 36-39 (NFSH) is a binding site for ATP. The ATP site is built by Arg75 and Lys152. Residue Glu214 participates in Mg(2+) binding. Positions 237, 238, and 270 each coordinate substrate. Position 238 (Asp238) interacts with Mg(2+).

It belongs to the pyruvate kinase family. In terms of assembly, homotetramer. Requires Mg(2+) as cofactor. K(+) is required as a cofactor.

It carries out the reaction pyruvate + ATP = phosphoenolpyruvate + ADP + H(+). It functions in the pathway carbohydrate degradation; glycolysis; pyruvate from D-glyceraldehyde 3-phosphate: step 5/5. In Encephalitozoon cuniculi (strain GB-M1) (Microsporidian parasite), this protein is Pyruvate kinase (PYK1).